The chain runs to 55 residues: ATP synthase F(0) complex subunit 8 (55 aa).

Residues 9–29 (WFFIMIMSWAVFLLLIQPKLL) form a helical membrane-spanning segment.

It belongs to the ATPase protein 8 family. In terms of assembly, component of the ATP synthase complex composed at least of ATP5F1A/subunit alpha, ATP5F1B/subunit beta, ATP5MC1/subunit c (homooctomer), MT-ATP6/subunit a, MT-ATP8/subunit 8, ATP5ME/subunit e, ATP5MF/subunit f, ATP5MG/subunit g, ATP5MK/subunit k, ATP5MJ/subunit j, ATP5F1C/subunit gamma, ATP5F1D/subunit delta, ATP5F1E/subunit epsilon, ATP5PF/subunit F6, ATP5PB/subunit b, ATP5PD/subunit d, ATP5PO/subunit OSCP. ATP synthase complex consists of a soluble F(1) head domain (subunits alpha(3) and beta(3)) - the catalytic core - and a membrane F(0) domain - the membrane proton channel (subunits c, a, 8, e, f, g, k and j). These two domains are linked by a central stalk (subunits gamma, delta, and epsilon) rotating inside the F1 region and a stationary peripheral stalk (subunits F6, b, d, and OSCP).

It localises to the mitochondrion membrane. Its function is as follows. Subunit 8, of the mitochondrial membrane ATP synthase complex (F(1)F(0) ATP synthase or Complex V) that produces ATP from ADP in the presence of a proton gradient across the membrane which is generated by electron transport complexes of the respiratory chain. ATP synthase complex consist of a soluble F(1) head domain - the catalytic core - and a membrane F(1) domain - the membrane proton channel. These two domains are linked by a central stalk rotating inside the F(1) region and a stationary peripheral stalk. During catalysis, ATP synthesis in the catalytic domain of F(1) is coupled via a rotary mechanism of the central stalk subunits to proton translocation. In vivo, can only synthesize ATP although its ATP hydrolase activity can be activated artificially in vitro. Part of the complex F(0) domain. This Rhea americana (Greater rhea) protein is ATP synthase F(0) complex subunit 8.